The sequence spans 250 residues: Dimethyl sulfide dehydrogenase assembly chaperone protein (250 aa).

The segment at Ser231–Gly250 is disordered.

Belongs to the type II DMSO reductase enzyme chaperone family.

The protein localises to the cytoplasm. Its function is as follows. May function as a system-specific chaperone protein essential for the assembly of an active dimethyl sulfide dehydrogenase DdhABC. This chain is Dimethyl sulfide dehydrogenase assembly chaperone protein (ddhD), found in Rhodovulum sulfidophilum (Rhodobacter sulfidophilus).